The following is a 169-amino-acid chain: Ureidoglycolate lyase (169 aa).

This sequence belongs to the ureidoglycolate lyase family. Homodimer. Ni(2+) is required as a cofactor.

The catalysed reaction is (S)-ureidoglycolate = urea + glyoxylate. Its pathway is nitrogen metabolism; (S)-allantoin degradation. In terms of biological role, catalyzes the catabolism of the allantoin degradation intermediate (S)-ureidoglycolate, generating urea and glyoxylate. Involved in the utilization of allantoin as nitrogen source. The polypeptide is Ureidoglycolate lyase (Brucella abortus biovar 1 (strain 9-941)).